The primary structure comprises 356 residues: Protein-glutamate methylesterase/protein-glutamine glutaminase 2 (356 aa).

The 118-residue stretch at 7–124 (KVLCVDDSAL…RDGLMEYTDT (118 aa)) folds into the Response regulatory domain. A 4-aspartylphosphate modification is found at D58. Positions 157 to 349 (LLSTEKLIIL…QRVMARLATY (193 aa)) constitute a CheB-type methylesterase domain. Residues S169, H195, and D291 contribute to the active site.

The protein belongs to the CheB family. Phosphorylated by CheA. Phosphorylation of the N-terminal regulatory domain activates the methylesterase activity.

Its subcellular location is the cytoplasm. The enzyme catalyses [protein]-L-glutamate 5-O-methyl ester + H2O = L-glutamyl-[protein] + methanol + H(+). It catalyses the reaction L-glutaminyl-[protein] + H2O = L-glutamyl-[protein] + NH4(+). Functionally, involved in chemotaxis. Part of a chemotaxis signal transduction system that modulates chemotaxis in response to various stimuli. Catalyzes the demethylation of specific methylglutamate residues introduced into the chemoreceptors (methyl-accepting chemotaxis proteins or MCP) by CheR. Also mediates the irreversible deamidation of specific glutamine residues to glutamic acid. The protein is Protein-glutamate methylesterase/protein-glutamine glutaminase 2 of Cupriavidus pinatubonensis (strain JMP 134 / LMG 1197) (Cupriavidus necator (strain JMP 134)).